Here is a 357-residue protein sequence, read N- to C-terminus: uncharacterized protein (357 aa).

The next 9 membrane-spanning stretches (helical) occupy residues 13–33 (PVTGIYNILLFNLFPLATYLV), 44–64 (IACTLLCSITVILAYRMCAVY), 72–92 (VSTFGLAYGFLIMMSLRTCFL), 148–168 (VLTYKSLGIRTAVYVGAFCFV), 181–201 (LPISANPWYIQVAFCVTSGFF), 203–223 (YLFINALYYLFAIIFVPLGIW), 266–286 (IALTGSKFLASCSCFFLSALF), 293–313 (SISGRCSPAFFFQLLIQPFLI), and 327–347 (YWVLIIEMLINGTYGMGVVLL).

It localises to the mitochondrion membrane. This is an uncharacterized protein from Schizosaccharomyces pombe (strain 972 / ATCC 24843) (Fission yeast).